A 790-amino-acid chain; its full sequence is Pleckstrin homology domain-containing family G member 6 (790 aa).

Residues 63-91 form a disordered region; sequence SGQARGLSPMRLRDPEPEKRHGGHVGAGL. The span at 73–82 shows a compositional bias: basic and acidic residues; it reads RLRDPEPEKR. The DH domain maps to 161–353; it reads HQQEALWELL…ESFLRHINGQ (193 aa). The PH domain occupies 409–509; the sequence is QLLLEGPVRV…WLEKTQQAQA (101 aa). 2 stretches are compositionally biased toward basic and acidic residues: residues 529-538 and 625-635; these read LYRDQDRESP and ELRDIPLRPHP. 3 disordered regions span residues 529 to 677, 690 to 730, and 748 to 790; these read LYRD…ASER, LRGQ…HTSL, and SQRI…ASEV. Over residues 748–762 the composition is skewed to basic and acidic residues; that stretch reads SQRIEGAEEPRDSRP.

Interacts with MYH10. Interacts with ELMO1 and EZR (in an open conformation). Interacts with CSPP1. Highest expression in the placenta. Low levels in small intestine, lung, liver, kidney, thymus and heart.

Its subcellular location is the cell projection. The protein resides in the microvillus. It is found in the cytoplasm. It localises to the cytoskeleton. The protein localises to the spindle. Its subcellular location is the spindle pole. The protein resides in the cleavage furrow. Guanine nucleotide exchange factor activating the small GTPase RHOA, which, in turn, induces myosin filament formation. Also activates RHOG. Does not activate RAC1, or to a much lower extent than RHOA and RHOG. Part of a functional unit, involving PLEKHG6, MYH10 and RHOA, at the cleavage furrow to advance furrow ingression during cytokinesis. In epithelial cells, required for the formation of microvilli and membrane ruffles on the apical pole. Along with EZR, required for normal macropinocytosis. This chain is Pleckstrin homology domain-containing family G member 6 (PLEKHG6), found in Homo sapiens (Human).